Here is a 36-residue protein sequence, read N- to C-terminus: Photosystem II reaction center protein M (36 aa).

Residues Ile5 to Leu25 form a helical membrane-spanning segment.

It belongs to the PsbM family. PSII is composed of 1 copy each of membrane proteins PsbA, PsbB, PsbC, PsbD, PsbE, PsbF, PsbH, PsbI, PsbJ, PsbK, PsbL, PsbM, PsbT, PsbX, PsbY, PsbZ, Psb30/Ycf12, at least 3 peripheral proteins of the oxygen-evolving complex and a large number of cofactors. It forms dimeric complexes.

Its subcellular location is the plastid. The protein resides in the chloroplast thylakoid membrane. One of the components of the core complex of photosystem II (PSII). PSII is a light-driven water:plastoquinone oxidoreductase that uses light energy to abstract electrons from H(2)O, generating O(2) and a proton gradient subsequently used for ATP formation. It consists of a core antenna complex that captures photons, and an electron transfer chain that converts photonic excitation into a charge separation. This subunit is found at the monomer-monomer interface. The polypeptide is Photosystem II reaction center protein M (Chlorokybus atmophyticus (Soil alga)).